We begin with the raw amino-acid sequence, 755 residues long: Dolichyl-phosphate-mannose--protein mannosyltransferase 4 (755 aa).

The tract at residues 1–23 is disordered; that stretch reads MSQTLKKRGGNSSGRKSPTTSNI. An N-linked (GlcNAc...) asparagine glycan is attached at N11. The span at 13-23 shows a compositional bias: polar residues; it reads SGRKSPTTSNI. A run of 6 helical transmembrane segments spans residues 92–112, 147–167, 185–205, 212–232, 237–257, and 278–298; these read FFDLHPPFAKLLIAFVGWLIG, IVPIMFLTMKTLGFSVAACLF, ILLDATLILSVALTIFSYSKF, SFSSKWWTWLLATGVSLSCVI, VGVFTYLTIGIAVIHELWILL, and ALIIVPFCIYLYWFYLHFAIL. 3 consecutive MIR domains span residues 325–389, 396–454, and 466–523; these read SKPV…IVPT, GTKV…LRLH, and KKEI…FDLI. An N-linked (GlcNAc...) asparagine glycan is attached at N445. A run of 3 helical transmembrane segments spans residues 595-615, 640-660, and 670-690; these read IFFIGNIIGFWLEVCFLSIYI, LYNTLGFLFVGWAAHYLPFFL, and YLPAHLVAALFSGGLVEFICS. N-linked (GlcNAc...) asparagine glycosylation is present at N691. The helical transmembrane segment at 706–726 threads the bilayer; that stretch reads YKIIAVVAACSTAIIWFFFYF.

The protein belongs to the glycosyltransferase 39 family. Forms a functional homodimer.

Its subcellular location is the endoplasmic reticulum membrane. It carries out the reaction a di-trans,poly-cis-dolichyl beta-D-mannosyl phosphate + L-seryl-[protein] = 3-O-(alpha-D-mannosyl)-L-seryl-[protein] + a di-trans,poly-cis-dolichyl phosphate + H(+). It catalyses the reaction a di-trans,poly-cis-dolichyl beta-D-mannosyl phosphate + L-threonyl-[protein] = 3-O-(alpha-D-mannosyl)-L-threonyl-[protein] + a di-trans,poly-cis-dolichyl phosphate + H(+). The protein operates within protein modification; protein glycosylation. Protein mannosyltransferase (PMT) involved in hyphal growth and drug sensitivity. Transfers mannose from Dol-P-mannose to Ser or Thr residues on proteins. PMT1, PMT2 and PMT4 account for most of the protein-O-glycosylation activity, while PMT5 and PMT6 may specifically modulate a much narrower spectrum of target proteins. Accounts for the O-glycosylation of AXL2, responsible for bud site selection, as well as of the SEC20 t-SNARE component. O-glycosylation of SEC20 is essential for its stability. Required for biofilm formation. The sequence is that of Dolichyl-phosphate-mannose--protein mannosyltransferase 4 from Candida albicans (strain SC5314 / ATCC MYA-2876) (Yeast).